Here is a 207-residue protein sequence, read N- to C-terminus: p-benzoquinone reductase (207 aa).

Residues 5-196 form the Flavodoxin-like domain; the sequence is IQIVFYSSYG…QIARFQGKHV (192 aa). Residues 11-16, 84-86, 119-125, and His140 each bind FMN; these read SSYGHI, TRF, and STASQHG. Residue Tyr13 coordinates NADP(+).

It belongs to the WrbA family. As to quaternary structure, homodimer. It depends on FMN as a cofactor.

The catalysed reaction is 1,4-benzoquinone + NADPH + H(+) = hydroquinone + NADP(+). It participates in xenobiotic degradation; 4-nitrophenol degradation. In terms of biological role, involved in the degradation of para-nitrophenol (PNP). Catalyzes the reduction of p-benzoquinone to hydroquinone. The protein is p-benzoquinone reductase (pnpB) of Pseudomonas sp. (strain WBC-3).